Reading from the N-terminus, the 441-residue chain is Growth/differentiation factor 9 (441 aa).

Residues 1-29 (MALPSNFLLGVCCFAWLCFLSSLSSQAST) form the signal peptide. The propeptide occupies 30 to 306 (EESQSGASEN…EVERSPRRRR (277 aa)). 4 N-linked (GlcNAc...) asparagine glycosylation sites follow: Asn-163, Asn-229, Asn-258, and Asn-325. Disulfide bonds link Cys-340–Cys-406, Cys-369–Cys-438, and Cys-373–Cys-440.

This sequence belongs to the TGF-beta family. Homodimer or heterodimer (Potential). But, in contrast to other members of this family, cannot be disulfide-linked. Post-translationally, phosphorylated; phosphorylation is critical for GDF9 function. Ovary. Strongly expressed in germinal vesicle (GV) stage oocytes, MII-stage oocytes and in zygotes.

Its subcellular location is the secreted. Required for ovarian folliculogenesis. This Mus musculus (Mouse) protein is Growth/differentiation factor 9 (Gdf9).